A 188-amino-acid chain; its full sequence is Elongation factor P (188 aa).

Belongs to the elongation factor P family.

It localises to the cytoplasm. The protein operates within protein biosynthesis; polypeptide chain elongation. In terms of biological role, involved in peptide bond synthesis. Stimulates efficient translation and peptide-bond synthesis on native or reconstituted 70S ribosomes in vitro. Probably functions indirectly by altering the affinity of the ribosome for aminoacyl-tRNA, thus increasing their reactivity as acceptors for peptidyl transferase. This Parabacteroides distasonis (strain ATCC 8503 / DSM 20701 / CIP 104284 / JCM 5825 / NCTC 11152) protein is Elongation factor P.